The sequence spans 860 residues: LPS-assembly protein LptD (860 aa).

An N-terminal signal peptide occupies residues Met-1 to Ala-21.

The protein belongs to the LptD family. As to quaternary structure, component of the lipopolysaccharide transport and assembly complex. Interacts with LptE and LptA.

The protein resides in the cell outer membrane. Functionally, together with LptE, is involved in the assembly of lipopolysaccharide (LPS) at the surface of the outer membrane. The polypeptide is LPS-assembly protein LptD (Saccharophagus degradans (strain 2-40 / ATCC 43961 / DSM 17024)).